Here is a 1830-residue protein sequence, read N- to C-terminus: Dedicator of cytokinesis protein 2 (1830 aa).

In terms of domain architecture, SH3 spans 8–69 (DKERHGVAIY…PKSFIHIKEV (62 aa)). Lys304 bears the N6-acetyllysine mark. Residues 423–607 (RNDIYITLLQ…DVFSISTLVC (185 aa)) enclose the C2 DOCK-type domain. Phosphoserine is present on residues Ser588 and Ser593. Lys738 bears the N6-acetyllysine mark. The segment at 939-1476 (CMTAILNQMG…TSFVTAYKLP (538 aa)) is interaction with CRKL. The DOCKER domain occupies 1211 to 1622 (YKDNNREEMY…VEKEYGVREM (412 aa)). Over residues 1651–1665 (MNSDCSTPSKPTSES) the composition is skewed to polar residues. The disordered stretch occupies residues 1651 to 1704 (MNSDCSTPSKPTSESFDLELASPKTPRVEQEEPISPGSTLPEVKLRRSKKRTKR). A phosphoserine mark is found at Ser1685, Ser1706, Ser1731, and Ser1784.

The protein belongs to the DOCK family. As to quaternary structure, homodimer. Interacts with RAC1 and RAC2. Interacts with CRKL and VAV. Interacts with CD3Z. Specifically expressed in hematopoietic cells. Highly expressed in peripheral blood leukocytes, and expressed at intermediate level in thymus and spleen. Expressed at very low level in the small intestine and colon.

Its subcellular location is the endomembrane system. It localises to the cytoplasm. It is found in the cytoskeleton. Involved in cytoskeletal rearrangements required for lymphocyte migration in response of chemokines. Activates RAC1 and RAC2, but not CDC42, by functioning as a guanine nucleotide exchange factor (GEF), which exchanges bound GDP for free GTP. May also participate in IL2 transcriptional activation via the activation of RAC2. This is Dedicator of cytokinesis protein 2 (DOCK2) from Homo sapiens (Human).